Consider the following 441-residue polypeptide: Damage-control phosphatase ARMT1 (441 aa).

At Ala2 the chain carries N-acetylalanine. The residue at position 40 (Lys40) is an N6-acetyllysine. Ser102 is subject to Phosphoserine. Mn(2+)-binding residues include Asp253 and Asn254. A substrate-binding site is contributed by 253–254 (DN). Glu258 and Asp291 together coordinate S-adenosyl-L-methionine. Asp291 serves as a coordination point for Mn(2+). Residues 367-371 (DLNYR) and Lys404 each bind substrate. A Subfamily III RTxK motif motif is present at residues 401–404 (RTLK).

The protein belongs to the damage-control phosphatase family. Sugar phosphate phosphatase III subfamily. Requires Mn(2+) as cofactor. It depends on Ni(2+) as a cofactor. Post-translationally, automethylated.

It catalyses the reaction beta-D-fructose 1-phosphate + H2O = D-fructose + phosphate. The enzyme catalyses beta-D-fructose 6-phosphate = dihydroxyacetone + D-glyceraldehyde 3-phosphate. It carries out the reaction L-glutamyl-[protein] + S-adenosyl-L-methionine = [protein]-L-glutamate 5-O-methyl ester + S-adenosyl-L-homocysteine. Its function is as follows. Metal-dependent phosphatase that shows phosphatase activity against several substrates, including fructose-1-phosphate and fructose-6-phosphate. Its preference for fructose-1-phosphate, a strong glycating agent that causes DNA damage rather than a canonical yeast metabolite, suggests a damage-control function in hexose phosphate metabolism. Has also been shown to have O-methyltransferase activity that methylates glutamate residues of target proteins to form gamma-glutamyl methyl ester residues. Possibly methylates PCNA, suggesting it is involved in the DNA damage response. The protein is Damage-control phosphatase ARMT1 of Homo sapiens (Human).